The sequence spans 764 residues: 5-methyltetrahydropteroyltriglutamate--homocysteine methyltransferase (764 aa).

5-methyltetrahydropteroyltri-L-glutamate contacts are provided by residues 16 to 19 and Lys121; that span reads RELK. L-homocysteine contacts are provided by residues 440–442 and Glu493; that span reads IGS. Residues 440–442 and Glu493 each bind L-methionine; that span reads IGS. 5-methyltetrahydropteroyltri-L-glutamate contacts are provided by residues 524–525 and Trp570; that span reads RC. Residue Asp608 coordinates L-homocysteine. Asp608 serves as a coordination point for L-methionine. Position 614 (Glu614) interacts with 5-methyltetrahydropteroyltri-L-glutamate. Zn(2+) is bound by residues His650, Cys652, and Glu674. His703 functions as the Proton donor in the catalytic mechanism. Cys735 is a binding site for Zn(2+).

Belongs to the vitamin-B12 independent methionine synthase family. Requires Zn(2+) as cofactor.

The enzyme catalyses 5-methyltetrahydropteroyltri-L-glutamate + L-homocysteine = tetrahydropteroyltri-L-glutamate + L-methionine. Its pathway is amino-acid biosynthesis; L-methionine biosynthesis via de novo pathway; L-methionine from L-homocysteine (MetE route): step 1/1. Its function is as follows. Catalyzes the transfer of a methyl group from 5-methyltetrahydrofolate to homocysteine resulting in methionine formation. The protein is 5-methyltetrahydropteroyltriglutamate--homocysteine methyltransferase of Burkholderia ambifaria (strain ATCC BAA-244 / DSM 16087 / CCUG 44356 / LMG 19182 / AMMD) (Burkholderia cepacia (strain AMMD)).